We begin with the raw amino-acid sequence, 511 residues long: Putative thymidine phosphorylase (511 aa).

The protein belongs to the thymidine/pyrimidine-nucleoside phosphorylase family. Type 2 subfamily.

The catalysed reaction is thymidine + phosphate = 2-deoxy-alpha-D-ribose 1-phosphate + thymine. The sequence is that of Putative thymidine phosphorylase from Bradyrhizobium sp. (strain BTAi1 / ATCC BAA-1182).